The chain runs to 223 residues: Ras-related protein Rab-37 (223 aa).

A compositionally biased stretch (low complexity) spans 1 to 13; the sequence is MTGTPGAATAGDG. The disordered stretch occupies residues 1–22; that stretch reads MTGTPGAATAGDGEAPERSPPF. An N-acetylthreonine modification is found at threonine 2. GTP-binding residues include serine 38, glycine 39, valine 40, glycine 41, lysine 42, threonine 43, cysteine 44, and threonine 62. Threonine 43 contacts Mg(2+). 2 consecutive short sequence motifs (switch) follow at residues 52–67 and 85–102; these read GAFL…GIDS and DTAG…YYRD. Positions 62 and 85 each coordinate Mg(2+). Residues glycine 88, asparagine 143, lysine 144, aspartate 146, serine 173, alanine 174, and lysine 175 each coordinate GTP. S-geranylgeranyl cysteine attachment occurs at residues cysteine 219 and cysteine 220. A Cysteine methyl ester modification is found at cysteine 220. The propeptide at 221–223 is removed in mature form; that stretch reads SFV.

This sequence belongs to the small GTPase superfamily. Rab family. Interacts with RIMS1. Interacts (in GDP-bound form) with RPGR, RPGR functions as guanine exchange factor (GEF). Requires Mg(2+) as cofactor. In terms of tissue distribution, expressed in the retina (at protein level). Specifically expressed in the bone marrow mast cells.

The protein resides in the cytoplasmic vesicle. It localises to the cell projection. Its subcellular location is the cilium. The catalysed reaction is GTP + H2O = GDP + phosphate + H(+). Regulated by guanine nucleotide exchange factors (GEFs) including RPGR which promote the exchange of bound GDP for free GTP. Regulated by GTPase activating proteins (GAPs) which increase the GTP hydrolysis activity. Inhibited by GDP dissociation inhibitors (GDIs). Its function is as follows. The small GTPases Rab are key regulators of intracellular membrane trafficking, from the formation of transport vesicles to their fusion with membranes. Rabs cycle between an inactive GDP-bound form and an active GTP-bound form that is able to recruit to membranes different sets of downstream effectors directly responsible for vesicle formation, movement, tethering and fusion. Acts as an organizer for autophagosome biogenesis in a GTP-dependent manner. Involved in retinal homeostasis by autophagy regulation. This is Ras-related protein Rab-37 from Mus musculus (Mouse).